Reading from the N-terminus, the 250-residue chain is Isoprenyl transferase (250 aa).

Residue aspartate 27 is part of the active site. Aspartate 27 contacts Mg(2+). Residues 28 to 31 (GNRR), tryptophan 32, histidine 48, and 76 to 78 (STE) contribute to the substrate site. Residue asparagine 79 is the Proton acceptor of the active site. Substrate contacts are provided by residues phenylalanine 80, arginine 82, arginine 199, and 205–207 (RVS). Position 218 (glutamate 218) interacts with Mg(2+).

It belongs to the UPP synthase family. Homodimer. Mg(2+) is required as a cofactor.

In terms of biological role, catalyzes the condensation of isopentenyl diphosphate (IPP) with allylic pyrophosphates generating different type of terpenoids. The polypeptide is Isoprenyl transferase (Chlamydia caviae (strain ATCC VR-813 / DSM 19441 / 03DC25 / GPIC) (Chlamydophila caviae)).